The chain runs to 85 residues: Small cysteine and glycine repeat-containing protein 5 (85 aa).

The 10 X 2 AA repeats of CG stretch occupies residues 4-69 (CGCGGCGGCG…TCCSCGCGCG (66 aa)).

This sequence belongs to the KRTAP type 28 family.

Its function is as follows. In the hair cortex, hair keratin intermediate filaments are embedded in an interfilamentous matrix, consisting of hair keratin-associated proteins (KRTAP), which are essential for the formation of a rigid and resistant hair shaft through their extensive disulfide bond cross-linking with abundant cysteine residues of hair keratins. The matrix proteins include the high-sulfur and high-glycine-tyrosine keratins. The sequence is that of Small cysteine and glycine repeat-containing protein 5 from Homo sapiens (Human).